Here is a 236-residue protein sequence, read N- to C-terminus: Small ribosomal subunit protein uS2c (236 aa).

It belongs to the universal ribosomal protein uS2 family.

The protein localises to the plastid. Its subcellular location is the chloroplast. This is Small ribosomal subunit protein uS2c (rps2) from Carica papaya (Papaya).